We begin with the raw amino-acid sequence, 315 residues long: Putative 2-hydroxyacid dehydrogenase HI_1556 (315 aa).

Residues threonine 73, 156-157 (CL), 231-233 (TGR), and aspartate 257 each bind NAD(+). Residue arginine 233 is part of the active site. Glutamate 262 is a catalytic residue. Histidine 285 acts as the Proton donor in catalysis. 285–288 (HIAW) serves as a coordination point for NAD(+).

The protein belongs to the D-isomer specific 2-hydroxyacid dehydrogenase family.

The protein is Putative 2-hydroxyacid dehydrogenase HI_1556 of Haemophilus influenzae (strain ATCC 51907 / DSM 11121 / KW20 / Rd).